Here is a 299-residue protein sequence, read N- to C-terminus: Ribosomal RNA small subunit methyltransferase A (299 aa).

Positions 44, 46, 71, 92, 122, and 141 each coordinate S-adenosyl-L-methionine.

It belongs to the class I-like SAM-binding methyltransferase superfamily. rRNA adenine N(6)-methyltransferase family. RsmA subfamily.

It localises to the cytoplasm. It catalyses the reaction adenosine(1518)/adenosine(1519) in 16S rRNA + 4 S-adenosyl-L-methionine = N(6)-dimethyladenosine(1518)/N(6)-dimethyladenosine(1519) in 16S rRNA + 4 S-adenosyl-L-homocysteine + 4 H(+). Specifically dimethylates two adjacent adenosines (A1518 and A1519) in the loop of a conserved hairpin near the 3'-end of 16S rRNA in the 30S particle. May play a critical role in biogenesis of 30S subunits. The chain is Ribosomal RNA small subunit methyltransferase A from Rhodococcus erythropolis (strain PR4 / NBRC 100887).